We begin with the raw amino-acid sequence, 336 residues long: Tetraacyldisaccharide 4'-kinase (336 aa).

60-67 contributes to the ATP binding site; that stretch reads TVGGTGKT.

This sequence belongs to the LpxK family.

It carries out the reaction a lipid A disaccharide + ATP = a lipid IVA + ADP + H(+). Its pathway is glycolipid biosynthesis; lipid IV(A) biosynthesis; lipid IV(A) from (3R)-3-hydroxytetradecanoyl-[acyl-carrier-protein] and UDP-N-acetyl-alpha-D-glucosamine: step 6/6. In terms of biological role, transfers the gamma-phosphate of ATP to the 4'-position of a tetraacyldisaccharide 1-phosphate intermediate (termed DS-1-P) to form tetraacyldisaccharide 1,4'-bis-phosphate (lipid IVA). The protein is Tetraacyldisaccharide 4'-kinase of Pseudomonas fluorescens (strain Pf0-1).